A 265-amino-acid polypeptide reads, in one-letter code: Dehydrin COR47 (265 aa).

Over residues 1-14 (MAEEYKNNVPEHET) the composition is skewed to basic and acidic residues. The interval 1-265 (MAEEYKNNVP…EVKKEKESDD (265 aa)) is disordered. The residue at position 2 (Ala-2) is an N-acetylalanine. Polar residues predominate over residues 16–28 (TVATEESPATTTE). The span at 29 to 47 (VTDRGLFDFLGKKEEEVKP) shows a compositional bias: basic and acidic residues. Position 64 is a phosphoserine (Ser-64). Over residues 69 to 79 (AAEHEEVKENK) the composition is skewed to basic and acidic residues. Thr-90 carries the post-translational modification Phosphothreonine. Composition is skewed to basic and acidic residues over residues 96 to 105 (NKPSVIEKLH) and 129 to 156 (IVEGEEDKKGLVEKIKEKLPGHHDKTAE). The stretch at 133–153 (EEDKKGLVEKIKEKLPGHHDK) is repeat 1. The tract at residues 133–251 (EEDKKGLVEK…KEKLPGYHAK (119 aa)) is 3 X 21 AA repeats, Lys-rich. Residues 160 to 172 (PVSTTIPVPVSES) are compositionally biased toward low complexity. Basic and acidic residues-rich tracts occupy residues 173–204 (VVEHDHPEEEKKGLVEKIKEKLPGHHDEKAED) and 227–265 (PVEHPEEKKGILEKIKEKLPGYHAKTTEEEVKKEKESDD). 2 consecutive repeat copies span residues 180–200 (EEEKKGLVEKIKEKLPGHHDE) and 231–251 (PEEKKGILEKIKEKLPGYHAK).

Belongs to the plant dehydrin family.

This chain is Dehydrin COR47 (COR47), found in Arabidopsis thaliana (Mouse-ear cress).